Here is a 520-residue protein sequence, read N- to C-terminus: Peptide chain release factor 3 (520 aa).

The 270-residue stretch at 8 to 277 (ESRKTFAIIS…FAPMPNARQT (270 aa)) folds into the tr-type G domain. GTP-binding positions include 17-24 (SHPDAGKT), 85-89 (DTPGH), and 139-142 (NKLD).

The protein belongs to the TRAFAC class translation factor GTPase superfamily. Classic translation factor GTPase family. PrfC subfamily.

It is found in the cytoplasm. Functionally, increases the formation of ribosomal termination complexes and stimulates activities of RF-1 and RF-2. It binds guanine nucleotides and has strong preference for UGA stop codons. It may interact directly with the ribosome. The stimulation of RF-1 and RF-2 is significantly reduced by GTP and GDP, but not by GMP. The protein is Peptide chain release factor 3 of Staphylococcus aureus (strain MRSA252).